A 161-amino-acid chain; its full sequence is MTQATDSGFVQPYKGDPFVGHLSTPISDSDFTRAFIGNLPIYRPGLSPILRGLEVGMAHGYFIVGPWTKLGPLRDSAVANLGGLISTIALVLIATICLSAYGLVSFQGKSPEGADPLKTSEGWSQFTGGFFIGAMGGAVVAFFLLENFELVDSIFRGLFNS.

The next 2 membrane-spanning stretches (helical) occupy residues 84-104 (LISTIALVLIATICLSAYGLV) and 126-146 (FTGGFFIGAMGGAVVAFFLLE).

The protein belongs to the PsaL family.

The protein resides in the cellular thylakoid membrane. This chain is Photosystem I reaction center subunit XI, found in Trichodesmium erythraeum (strain IMS101).